We begin with the raw amino-acid sequence, 162 residues long: Shikimate kinase (162 aa).

ATP is bound at residue 11–16; sequence GSGKSS. Serine 15 is a binding site for Mg(2+). 3 residues coordinate substrate: aspartate 33, arginine 57, and glycine 80. Arginine 116 is a binding site for ATP. Substrate is bound at residue arginine 132.

Belongs to the shikimate kinase family. Monomer. Mg(2+) serves as cofactor.

The protein resides in the cytoplasm. It catalyses the reaction shikimate + ATP = 3-phosphoshikimate + ADP + H(+). It participates in metabolic intermediate biosynthesis; chorismate biosynthesis; chorismate from D-erythrose 4-phosphate and phosphoenolpyruvate: step 5/7. In terms of biological role, catalyzes the specific phosphorylation of the 3-hydroxyl group of shikimic acid using ATP as a cosubstrate. The chain is Shikimate kinase from Helicobacter pylori (strain HPAG1).